The primary structure comprises 229 residues: Cytidylate kinase (229 aa).

ATP is bound at residue 10–18 (GFSSCGKST).

This sequence belongs to the cytidylate kinase family. Type 1 subfamily.

The protein resides in the cytoplasm. It carries out the reaction CMP + ATP = CDP + ADP. The catalysed reaction is dCMP + ATP = dCDP + ADP. This Bacteroides thetaiotaomicron (strain ATCC 29148 / DSM 2079 / JCM 5827 / CCUG 10774 / NCTC 10582 / VPI-5482 / E50) protein is Cytidylate kinase.